A 609-amino-acid polypeptide reads, in one-letter code: tRNA 5-methylaminomethyl-2-thiouridine biosynthesis bifunctional protein MnmC (609 aa).

Residues 1 to 229 form a tRNA (mnm(5)s(2)U34)-methyltransferase region; sequence MVELAAATCL…TRNTLPARAM (229 aa). Residues 237–609 are FAD-dependent cmnm(5)s(2)U34 oxidoreductase; that stretch reads IGAGLAGASV…SPELPVSCAP (373 aa).

This sequence in the N-terminal section; belongs to the methyltransferase superfamily. tRNA (mnm(5)s(2)U34)-methyltransferase family. In the C-terminal section; belongs to the DAO family. Requires FAD as cofactor.

The protein localises to the cytoplasm. The enzyme catalyses 5-aminomethyl-2-thiouridine(34) in tRNA + S-adenosyl-L-methionine = 5-methylaminomethyl-2-thiouridine(34) in tRNA + S-adenosyl-L-homocysteine + H(+). Functionally, catalyzes the last two steps in the biosynthesis of 5-methylaminomethyl-2-thiouridine (mnm(5)s(2)U) at the wobble position (U34) in tRNA. Catalyzes the FAD-dependent demodification of cmnm(5)s(2)U34 to nm(5)s(2)U34, followed by the transfer of a methyl group from S-adenosyl-L-methionine to nm(5)s(2)U34, to form mnm(5)s(2)U34. The protein is tRNA 5-methylaminomethyl-2-thiouridine biosynthesis bifunctional protein MnmC (mnmC) of Albidiferax ferrireducens (strain ATCC BAA-621 / DSM 15236 / T118) (Rhodoferax ferrireducens).